The chain runs to 1877 residues: Protein TIC 214 (1877 aa).

Helical transmembrane passes span 18–38 (IINS…FSVG), 64–84 (FITG…HLAL), 87–107 (PHTI…WKNH), 124–144 (LSIQ…HFIL), 172–192 (VGWL…LFWI), and 221–241 (IFRI…PSPI). Disordered regions lie at residues 246–313 (LKET…GKEK), 644–695 (DDFE…NSDR), and 774–795 (PEFK…QKKE). 3 stretches are compositionally biased toward acidic residues: residues 251 to 268 (ETEE…EIET), 281 to 304 (GSTE…DETE), and 645 to 659 (DFEE…ESTE). Over residues 685-695 (TSTKDTTNSDR) the composition is skewed to basic and acidic residues.

This sequence belongs to the TIC214 family. In terms of assembly, part of the Tic complex.

It is found in the plastid. Its subcellular location is the chloroplast inner membrane. Functionally, involved in protein precursor import into chloroplasts. May be part of an intermediate translocation complex acting as a protein-conducting channel at the inner envelope. The chain is Protein TIC 214 from Chloranthus spicatus (Chulantree).